The following is a 426-amino-acid chain: 3-phosphoshikimate 1-carboxyvinyltransferase (426 aa).

The 3-phosphoshikimate site is built by Lys-20, Ser-21, and Arg-25. Residue Lys-20 participates in phosphoenolpyruvate binding. Phosphoenolpyruvate-binding residues include Gly-92 and Arg-120. Residues Ser-166, Gln-168, Asp-312, and Lys-339 each coordinate 3-phosphoshikimate. Gln-168 contributes to the phosphoenolpyruvate binding site. Residue Asp-312 is the Proton acceptor of the active site. Phosphoenolpyruvate is bound by residues Arg-343 and Arg-385.

The protein belongs to the EPSP synthase family. As to quaternary structure, monomer.

Its subcellular location is the cytoplasm. The catalysed reaction is 3-phosphoshikimate + phosphoenolpyruvate = 5-O-(1-carboxyvinyl)-3-phosphoshikimate + phosphate. It participates in metabolic intermediate biosynthesis; chorismate biosynthesis; chorismate from D-erythrose 4-phosphate and phosphoenolpyruvate: step 6/7. Its function is as follows. Catalyzes the transfer of the enolpyruvyl moiety of phosphoenolpyruvate (PEP) to the 5-hydroxyl of shikimate-3-phosphate (S3P) to produce enolpyruvyl shikimate-3-phosphate and inorganic phosphate. This is 3-phosphoshikimate 1-carboxyvinyltransferase from Enterococcus faecalis (strain ATCC 700802 / V583).